Here is a 529-residue protein sequence, read N- to C-terminus: Acid-sensing ion channel 1C (529 aa).

Residues 1–51 (MTAMKGDSEDSIESMRPSNLQVFANNSTLHGMSHIFAYGHMTFRRFLWTLS) are Cytoplasmic-facing. Residues 52-68 (FMGSLGLLMYVCMDRVY) form a helical membrane-spanning segment. Residues 69 to 427 (YYFEFPHVTK…EKIEQKKAYE (359 aa)) lie on the Extracellular side of the membrane. N-linked (GlcNAc...) asparagine glycosylation is found at N86, N155, and N161. Cystine bridges form between C95/C196, C174/C181, C292/C367, C310/C363, C314/C361, C323/C345, and C325/C337. A glycan (N-linked (GlcNAc...) asparagine) is linked at N185. N-linked (GlcNAc...) asparagine glycans are attached at residues N368 and N395. Residues 428-458 (VAGLLGDIGGQMGLFIGASVLTILEIFDYLY) form a discontinuously helical membrane-spanning segment. Positions 444–446 (GAS) match the GAS motif; ion selectivity filter motif. At 459–529 (EVLKDKILGS…PFVVGSNSGK (71 aa)) the chain is on the cytoplasmic side.

It belongs to the amiloride-sensitive sodium channel (TC 1.A.6) family. ASIC1 subfamily. Homotrimer. Heterotrimer; with other ASIC proteins producing channel with different properties. Interacts with asic1a. As to expression, expressed in central nervous system.

It is found in the cell membrane. The protein localises to the postsynaptic cell membrane. The protein resides in the cell projection. Its subcellular location is the dendrite. It catalyses the reaction Na(+)(in) = Na(+)(out). The enzyme catalyses K(+)(in) = K(+)(out). It carries out the reaction Li(+)(in) = Li(+)(out). The catalysed reaction is Ca(2+)(in) = Ca(2+)(out). With respect to regulation, inhibited by the diuretic drug amiloride. Functionally, forms voltage-independent, pH-gated trimeric sodium channels that act as postsynaptic excitatory receptors in the nervous system, playing a crucial role in regulating synaptic plasticity, learning, and memory. Upon extracellular pH drop this channel elicits transient, fast activating, and completely desensitizing inward currents. Displays high selectivity for sodium ions but can also permit the permeation of other cations. This chain is Acid-sensing ion channel 1C, found in Danio rerio (Zebrafish).